Here is a 930-residue protein sequence, read N- to C-terminus: Dual serine/threonine and tyrosine protein kinase (930 aa).

The stretch at 383–428 (RKENELYESLMNIANRKQEEMKDMIIETLSNMKEELLEDAANMEFK) forms a coiled coil. The region spanning 653–907 (PKLGRELGRG…PLLGIVQPML (255 aa)) is the Protein kinase domain. ATP contacts are provided by residues 659-667 (LGRGQYGVV) and K682. The active-site Proton acceptor is D778.

The protein belongs to the protein kinase superfamily. Ser/Thr protein kinase family. In terms of tissue distribution, widely expressed with the highest expression in brain and ovary.

The protein localises to the cytoplasm. The protein resides in the cell membrane. It is found in the apical cell membrane. Its subcellular location is the basolateral cell membrane. It localises to the cell junction. The enzyme catalyses L-seryl-[protein] + ATP = O-phospho-L-seryl-[protein] + ADP + H(+). It carries out the reaction L-threonyl-[protein] + ATP = O-phospho-L-threonyl-[protein] + ADP + H(+). The catalysed reaction is L-tyrosyl-[protein] + ATP = O-phospho-L-tyrosyl-[protein] + ADP + H(+). Functionally, may act as a positive regulator of ERK phosphorylation downstream of fibroblast growth factor-receptor activation. May induce both caspase-dependent apoptosis and caspase-independent cell death. The sequence is that of Dual serine/threonine and tyrosine protein kinase (DSTYK) from Gallus gallus (Chicken).